We begin with the raw amino-acid sequence, 704 residues long: Probable serine/threonine-protein kinase WNK1 (704 aa).

The Protein kinase domain occupies 27-284 (GRYNDVLGKG…ARELLKDPFL (258 aa)). ATP is bound by residues 107-110 (TEMF) and Lys157. Residue Asp174 is the Proton acceptor of the active site. The interval 499 to 521 (QTDLQDSGGSSDDGGGQTQHVKD) is disordered.

It belongs to the protein kinase superfamily. Ser/Thr protein kinase family. WNK subfamily.

The enzyme catalyses L-seryl-[protein] + ATP = O-phospho-L-seryl-[protein] + ADP + H(+). It carries out the reaction L-threonyl-[protein] + ATP = O-phospho-L-threonyl-[protein] + ADP + H(+). The sequence is that of Probable serine/threonine-protein kinase WNK1 (WNK1) from Oryza sativa subsp. japonica (Rice).